Here is a 58-residue protein sequence, read N- to C-terminus: Small ribosomal subunit protein eS30 (58 aa).

The tract at residues 1–58 is disordered; it reads MGKVHGSLARAGKVKNQTPKVPKLDKKKRLTGRAKKRQLYNRRFSDNGGRKKGPNSKA. The segment covering 25 to 40 has biased composition (basic residues); it reads DKKKRLTGRAKKRQLY.

This sequence belongs to the eukaryotic ribosomal protein eS30 family. In terms of assembly, component of the small ribosomal subunit. Mature ribosomes consist of a small (40S) and a large (60S) subunit. The 40S subunit contains about 32 different proteins and 1 molecule of RNA (18S). The 60S subunit contains about 42 different proteins and 3 molecules of RNA (28S, 5.8S and 5S).

The protein localises to the cytoplasm. Component of the ribosome, a large ribonucleoprotein complex responsible for the synthesis of proteins in the cell. The small ribosomal subunit (SSU) binds messenger RNAs (mRNAs) and translates the encoded message by selecting cognate aminoacyl-transfer RNA (tRNA) molecules. The large subunit (LSU) contains the ribosomal catalytic site termed the peptidyl transferase center (PTC), which catalyzes the formation of peptide bonds, thereby polymerizing the amino acids delivered by tRNAs into a polypeptide chain. The nascent polypeptides leave the ribosome through a tunnel in the LSU and interact with protein factors that function in enzymatic processing, targeting, and the membrane insertion of nascent chains at the exit of the ribosomal tunnel. This Plasmodium falciparum (isolate 3D7) protein is Small ribosomal subunit protein eS30.